The chain runs to 435 residues: ATP-dependent protease ATPase subunit HslU (435 aa).

ATP is bound by residues I18, 60-65 (GVGKTE), D248, E313, and R385.

This sequence belongs to the ClpX chaperone family. HslU subfamily. In terms of assembly, a double ring-shaped homohexamer of HslV is capped on each side by a ring-shaped HslU homohexamer. The assembly of the HslU/HslV complex is dependent on binding of ATP.

It localises to the cytoplasm. Its function is as follows. ATPase subunit of a proteasome-like degradation complex; this subunit has chaperone activity. The binding of ATP and its subsequent hydrolysis by HslU are essential for unfolding of protein substrates subsequently hydrolyzed by HslV. HslU recognizes the N-terminal part of its protein substrates and unfolds these before they are guided to HslV for hydrolysis. The polypeptide is ATP-dependent protease ATPase subunit HslU (Roseobacter denitrificans (strain ATCC 33942 / OCh 114) (Erythrobacter sp. (strain OCh 114))).